The sequence spans 464 residues: Interstitial collagenase A (464 aa).

A signal peptide spans 1-17 (MPSLPLLLLLWAASSYS). Residues 18 to 96 (FPVFHNGDRQ…PRCGVPDVAP (79 aa)) constitute a propeptide, activation peptide. Residues 87–94 (PRCGVPDV) carry the Cysteine switch motif. Zn(2+) is bound at residue Cys-89. Residues 95 to 274 (APYAITHNNP…IQPTGATTPH (180 aa)) form a metalloprotease region. Position 155 (Asp-155) interacts with Ca(2+). His-165 and Asp-167 together coordinate Zn(2+). The Ca(2+) site is built by Asp-172 and Gly-173. His-180 lines the Zn(2+) pocket. Gly-187, Gly-189, and Asp-191 together coordinate Ca(2+). His-193 is a binding site for Zn(2+). Ca(2+)-binding residues include Asp-195 and Glu-198. N-linked (GlcNAc...) asparagine glycosylation occurs at Asn-202. His-215 provides a ligand contact to Zn(2+). Residue Glu-216 is part of the active site. Zn(2+)-binding residues include His-219 and His-225. 2 Hemopexin repeats span residues 273–322 (PHPC…WPNL) and 323–369 (PVKL…FGFP). Cys-276 and Cys-464 are disulfide-bonded. Asp-283 contacts Ca(2+). Residue Asn-371 is glycosylated (N-linked (GlcNAc...) asparagine). Hemopexin repeat units follow at residues 372-420 (VTHI…FPGI) and 421-464 (DDKV…WFNC). The Ca(2+) site is built by Asp-376 and Asp-425.

This sequence belongs to the peptidase M10A family. Ca(2+) is required as a cofactor. Requires Zn(2+) as cofactor.

The protein localises to the secreted. It is found in the extracellular space. It localises to the extracellular matrix. The enzyme catalyses Cleavage of the triple helix of collagen at about three-quarters of the length of the molecule from the N-terminus, at 775-Gly-|-Ile-776 in the alpha1(I) chain. Cleaves synthetic substrates and alpha-macroglobulins at bonds where P1' is a hydrophobic residue.. Can be activated without removal of the activation peptide. Functionally, cleaves collagens of types I, II, and III at one site in the helical domain. Also cleaves collagens of types VII and X. Able to degrade synthetic peptides and type I and II fibrillar collagen. The polypeptide is Interstitial collagenase A (Mmp1a) (Mus musculus (Mouse)).